The primary structure comprises 117 residues: MMTEFGSAMTLVTGLVAYGAYVKSKRQSNHYLLKTNNNFDVEKENFNYNNNNNNNNNNNNNNSNNNDNNNNNNSNSNNNNNNNNNNNNNNNNNINDKQINGTNIFDSNNQIKRRLFD.

The N-terminal stretch at 1 to 24 is a signal peptide; it reads MMTEFGSAMTLVTGLVAYGAYVKS. Positions 42 to 117 are disordered; the sequence is EKENFNYNNN…NNQIKRRLFD (76 aa). Residues 46 to 95 are compositionally biased toward low complexity; the sequence is FNYNNNNNNNNNNNNNNSNNNDNNNNNNSNSNNNNNNNNNNNNNNNNNIN. N-linked (GlcNAc...) asparagine glycosylation is found at asparagine 61 and asparagine 72. Positions 96 to 110 are enriched in polar residues; that stretch reads DKQINGTNIFDSNNQ.

The protein localises to the secreted. This is an uncharacterized protein from Dictyostelium discoideum (Social amoeba).